The chain runs to 137 residues: BolA-like protein 1 (137 aa).

At Ser-81 the chain carries Phosphoserine. The tract at residues 114 to 137 (WGENSQLDTSPPCLGGNKKTLGTP) is disordered.

It belongs to the BolA/IbaG family. As to quaternary structure, interacts with GLRX5.

It localises to the mitochondrion. Functionally, acts as a mitochondrial iron-sulfur (Fe-S) cluster assembly factor that facilitates (Fe-S) cluster insertion into a subset of mitochondrial proteins. Probably acts together with the monothiol glutaredoxin GLRX5. May protect cells against oxidative stress. In Pongo abelii (Sumatran orangutan), this protein is BolA-like protein 1 (BOLA1).